A 479-amino-acid chain; its full sequence is Membrane-bound lytic murein transglycosylase F (479 aa).

Positions 1 to 15 (MKRLLLVLCYITLLA) are cleaved as a signal peptide. Residues 16 to 258 (GCQKVVVEQE…HLNEKYFAHV (243 aa)) are non-LT domain. Positions 260 to 479 (RFDYVDTRAF…QTDAIQPQQP (220 aa)) are LT domain. Glu303 is a catalytic residue. Residues 457 to 479 (LQTAEAKETEEKPQTDAIQPQQP) are disordered. Over residues 461–470 (EAKETEEKPQ) the composition is skewed to basic and acidic residues.

The protein in the N-terminal section; belongs to the bacterial solute-binding protein 3 family. This sequence in the C-terminal section; belongs to the transglycosylase Slt family.

Its subcellular location is the cell outer membrane. The catalysed reaction is Exolytic cleavage of the (1-&gt;4)-beta-glycosidic linkage between N-acetylmuramic acid (MurNAc) and N-acetylglucosamine (GlcNAc) residues in peptidoglycan, from either the reducing or the non-reducing ends of the peptidoglycan chains, with concomitant formation of a 1,6-anhydrobond in the MurNAc residue.. Functionally, murein-degrading enzyme that degrades murein glycan strands and insoluble, high-molecular weight murein sacculi, with the concomitant formation of a 1,6-anhydromuramoyl product. Lytic transglycosylases (LTs) play an integral role in the metabolism of the peptidoglycan (PG) sacculus. Their lytic action creates space within the PG sacculus to allow for its expansion as well as for the insertion of various structures such as secretion systems and flagella. The polypeptide is Membrane-bound lytic murein transglycosylase F (Shewanella pealeana (strain ATCC 700345 / ANG-SQ1)).